A 1834-amino-acid chain; its full sequence is Sodium channel protein type 4 subunit alpha (1834 aa).

Topologically, residues 1–131 (MASSSLPNLV…RSAIKVLIHS (131 aa)) are cytoplasmic. The stretch at 113–448 (MLSPFSIIRR…VVTMAYAEQN (336 aa)) is one I repeat. Residues 132–150 (LFSMFIMITILPNCVVMTM) form a helical membrane-spanning segment. At 151-157 (SDPPPWP) the chain is on the extracellular side. A helical transmembrane segment spans residues 158–178 (IHVENTFTGINTFESLIKMLA). The Cytoplasmic segment spans residues 179 to 192 (RGFCIDDFTFLRDP). Residues 193-210 (WNWLDFSVIMMAYLTEFV) form a helical membrane-spanning segment. At 211–216 (DLGNIS) the chain is on the extracellular side. N-linked (GlcNAc...) asparagine glycosylation is present at Asn214. Residues 217-233 (ALRTFRVLRALKTITVI) form a helical membrane-spanning segment. Over 234 to 252 (PGLKTIVGALIQSVKKLSD) the chain is Cytoplasmic. The helical transmembrane segment at 253 to 272 (VMILTVFCLSVFALVGLQLF) threads the bilayer. The Extracellular portion of the chain corresponds to 273-385 (MGNLRQKCVR…PNYGYTSHDT (113 aa)). Cys280 and Cys354 form a disulfide bridge. Asn288, Asn291, Asn297, Asn303, Asn309, Asn327, and Asn356 each carry an N-linked (GlcNAc...) asparagine glycan. A disulfide bridge links Cys363 with Cys369. Residues 386–410 (FSWAFLALFRLMIQDYWENLFQLTL) constitute an intramembrane region (pore-forming). Topologically, residues 411 to 417 (RAAGKTY) are extracellular. A helical membrane pass occupies residues 418–438 (MIFFVVIIFLGSFYLINLILA). Residues 439–572 (VVTMAYAEQN…NIIHLIVMDP (134 aa)) lie on the Cytoplasmic side of the membrane. The segment at 486–525 (EGGEAGGDPAHSKDCNGSLDTSPGEKGPPRQSCSADSGVS) is disordered. One copy of the II repeat lies at 554–826 (CCTPWVKFKN…QISSWPIKLG (273 aa)). A helical transmembrane segment spans residues 573–591 (FVDLGITICIVLNTLFMAM). Over 592–602 (EHYPMTEHFDK) the chain is Extracellular. Residues 603–622 (VLTVGNLVFTGIFTAEMVLK) form a helical membrane-spanning segment. Residues 623–636 (LIALDPYEYFQQGW) lie on the Cytoplasmic side of the membrane. Residues 637 to 656 (NVFDSIIVTLSWVELGLVNV) form a helical membrane-spanning segment. The Extracellular portion of the chain corresponds to 657–658 (KG). A helical membrane pass occupies residues 659-676 (LSVLRSFRLVRSLKLAKS). At 677–692 (WPTLNMFIRIIGNSGG) the chain is on the cytoplasmic side. The chain crosses the membrane as a helical span at residues 693–711 (GLGNLTLVLAIIVVNFSVV). The Extracellular portion of the chain corresponds to 712–740 (GMQLFGKNYKECVCKNASDCALPRWKMCD). Cysteines 725 and 731 form a disulfide. Residues 741 to 761 (FFHSFLIVLRILCGEWIEPMW) constitute an intramembrane region (pore-forming). Residues 762 to 772 (GFMEVAGQAMF) are Extracellular-facing. A helical membrane pass occupies residues 773–791 (LTVLLMVMVNGNLVDLDLF). The Cytoplasmic portion of the chain corresponds to 792–1029 (LALLLNPLNS…ACFKIVEHHW (238 aa)). Disordered stretches follow at residues 853–886 (GDPG…KDLK) and 929–989 (SDLE…QPEE). The span at 860 to 869 (EAGEAEESAP) shows a compositional bias: acidic residues. Basic and acidic residues predominate over residues 870 to 886 (EDEKKEPPPEDDDKDLK). Composition is skewed to acidic residues over residues 929-945 (SDLE…FSEP) and 972-989 (EDPE…QPEE). The III repeat unit spans residues 1010 to 1323 (RGKMWWTLRR…KKYYNAMKKL (314 aa)). Residues 1030 to 1047 (FKTFNSSLILLNSGTLAF) traverse the membrane as a helical segment. Residues 1048–1060 (EDIYIEQRRVIRT) lie on the Extracellular side of the membrane. Residues 1061–1079 (ILEYADKVFTYIFIMEMLL) traverse the membrane as a helical segment. The Cytoplasmic segment spans residues 1080 to 1093 (KWVAYGFKVYFTNA). The helical transmembrane segment at 1094 to 1112 (WCWLDFLIVDVSIISLVAN) threads the bilayer. At 1113 to 1120 (WLGYSELG) the chain is on the extracellular side. A helical transmembrane segment spans residues 1121 to 1139 (PIKSLRTLRALRPLRALSR). The Cytoplasmic segment spans residues 1140-1156 (FEGMRVVVNALLGAIPS). Residues 1157 to 1176 (IMNVLLVCLIFWVIFSIMGV) traverse the membrane as a helical segment. Residues 1177-1227 (NLFAAKIYYFINTTTSERFDISGVNNKSECESLIHTGQVRWLNVKVNYDNV) lie on the Extracellular side of the membrane. N-linked (GlcNAc...) asparagine glycosylation is found at Asn1188 and Asn1202. The pore-forming intramembrane region spans 1228-1249 (GLGYLSLLQVATFKGWMDIMYS). The Extracellular portion of the chain corresponds to 1250 to 1266 (AVDSREQEEQPQYEVNI). Residues 1267–1288 (YMYLYFVIFIIFGSFFTINSLI) traverse the membrane as a helical segment. The Cytoplasmic segment spans residues 1289–1351 (RLIIVNFNQQ…MVYDFVTKQV (63 aa)). Positions 1307-1309 (IFM) are important for rapid channel inactivation. An IV repeat occupies 1332–1630 (IPRPQNKIQG…WEKFGPDATQ (299 aa)). Residues 1352 to 1369 (FDITIMILICLNMVTMMV) traverse the membrane as a helical segment. Over 1370–1380 (ETDDQSQLKVD) the chain is Extracellular. The chain crosses the membrane as a helical span at residues 1381-1399 (ILYNINMVFIIVFTGECVL). Residues 1400-1411 (KMFALRQNYFTV) are Cytoplasmic-facing. The helical transmembrane segment at 1412 to 1429 (GWNIFDFVVVILSIVGLA) threads the bilayer. Residues 1430-1442 (LSDLIQKYFVSPT) lie on the Extracellular side of the membrane. The helical transmembrane segment at 1443-1459 (LFRVIRLARIGRVLRLI) threads the bilayer. Residues 1460-1478 (RGAKGIRTLLFALMMSLPA) lie on the Cytoplasmic side of the membrane. A helical transmembrane segment spans residues 1479–1496 (LFNIGLLLILVMFIYSIF). Residues 1497–1518 (GMSNFAYVKKESGIDDMFNFET) are Extracellular-facing. Positions 1519 to 1541 (FGNSIICLFEITTSAGWDGLLNP) form an intramembrane region, pore-forming. Topologically, residues 1542-1571 (ILNSGPPDCDPTLENPGTSVRGDCGNPSIG) are extracellular. The cysteines at positions 1550 and 1565 are disulfide-linked. A helical transmembrane segment spans residues 1572 to 1594 (ICFFCSYIIISFLIVVNMYIAII). Over 1595–1834 (LENFNVATEE…LHPGVKESLV (240 aa)) the chain is Cytoplasmic. Residues 1724–1753 (EEVCAIKIQRAYRRHLLQRSVKQASYMYRH) form the IQ domain. The interval 1776 to 1834 (MYGRENGNSGVQNKGEERGSTGDAGPTMGLTPINPSDSALPPSPPPGLPLHPGVKESLV) is disordered.

The protein belongs to the sodium channel (TC 1.A.1.10) family. Nav1.4/SCN4A subfamily. In terms of assembly, the Nav1.4 voltage-gated sodium channel consists of an ion-conducting alpha subunit SCN4A which is functional on its own and a regulatory beta subunit SCN1B. SCN1B strongly enhances the presence of SCN4A at the cell surface. SCN1B is also required for rapid channel inactivation and recovery after inactivation. It prevents the decrease of channel activity in response to repetitive, high-frequency depolarizations. Interacts with the syntrophins SNTA1, SNTB1 and SNTB2 (via PDZ domain); probably links SCN4A to the actin cytoskeleton and the extracellular matrix via the dystrophin-associated protein complex and regulates its localization in muscle cells. Interacts with TMEM233; probable regulator of the channel.

The protein localises to the cell membrane. It carries out the reaction Na(+)(in) = Na(+)(out). Its function is as follows. Pore-forming subunit of Nav1.4, a voltage-gated sodium (Nav) channel that directly mediates the depolarizing phase of action potentials in excitable membranes. Navs, also called VGSCs (voltage-gated sodium channels) or VDSCs (voltage-dependent sodium channels), operate by switching between closed and open conformations depending on the voltage difference across the membrane. In the open conformation they allow Na(+) ions to selectively pass through the pore, along their electrochemical gradient. The influx of Na+ ions provokes membrane depolarization, initiating the propagation of electrical signals throughout cells and tissues. Highly expressed in skeletal muscles, Nav1.4 generates the action potential crucial for muscle contraction. The sequence is that of Sodium channel protein type 4 subunit alpha from Equus caballus (Horse).